A 460-amino-acid chain; its full sequence is MDSIVTTEDTIAAIASAISIGKGGVAIIRVSGKDAINSCKKIVQTKSKYAWESHRVFRGFIQENKQNKFIDEVLILVMKSPNSFTGEDVVELHCHGGIIIVNKVLKILLSNNSRVRLANPGEFSQRAFLNGKIDLTQAESINQLINASNARSAELAFSGVQGEIKKKIDDIKNDLINQLCEIEARVDFEEDFTDFDYTKYLKNIKKVKEKIELLIENAKRNSYIHNGISIALIGKTNVGKSSLLNLLAKKEKAIVTNIPGTTRDVIEVNLTINDIPMKIIDTAGIRETHEQIESIGIKKSFGKIKESDFIIYIYSLEEGFNEEDKKIIQEIPKEKLITILGNKKDLIDCKNINSNELKHTILMSIKNNDGERLLIDTIIKKCGLKQVENINIFLNDRHLTNLSACLSNLNDTDEIIENKLPFDLLSIELRDGIQNLSKITGQELTEELLDNIFSKFCIGK.

(6S)-5-formyl-5,6,7,8-tetrahydrofolate-binding residues include Arg29, Glu91, and Lys132. Residues 227-383 (GISIALIGKT…LIDTIIKKCG (157 aa)) enclose the TrmE-type G domain. Asn237 is a binding site for K(+). GTP-binding positions include 237 to 242 (NVGKSS), 256 to 262 (TNIPGTT), and 281 to 284 (DTAG). Ser241 contacts Mg(2+). K(+)-binding residues include Thr256, Ile258, and Thr261. Position 262 (Thr262) interacts with Mg(2+). Lys460 is a binding site for (6S)-5-formyl-5,6,7,8-tetrahydrofolate.

The protein belongs to the TRAFAC class TrmE-Era-EngA-EngB-Septin-like GTPase superfamily. TrmE GTPase family. In terms of assembly, homodimer. Heterotetramer of two MnmE and two MnmG subunits. Requires K(+) as cofactor.

Its subcellular location is the cytoplasm. Functionally, exhibits a very high intrinsic GTPase hydrolysis rate. Involved in the addition of a carboxymethylaminomethyl (cmnm) group at the wobble position (U34) of certain tRNAs, forming tRNA-cmnm(5)s(2)U34. The protein is tRNA modification GTPase MnmE of Prochlorococcus marinus (strain AS9601).